Consider the following 144-residue polypeptide: Large ribosomal subunit protein uL13 (144 aa).

It belongs to the universal ribosomal protein uL13 family. As to quaternary structure, part of the 50S ribosomal subunit.

In terms of biological role, this protein is one of the early assembly proteins of the 50S ribosomal subunit, although it is not seen to bind rRNA by itself. It is important during the early stages of 50S assembly. The polypeptide is Large ribosomal subunit protein uL13 (Clostridium perfringens (strain ATCC 13124 / DSM 756 / JCM 1290 / NCIMB 6125 / NCTC 8237 / Type A)).